The primary structure comprises 607 residues: (R)-limonene synthase 1, chloroplastic (607 aa).

Residues 1–52 constitute a chloroplast transit peptide; sequence MSSCINPSTLATSVNGFKCLPLATNRAAIRIMAKNKPVQCLVSTKYDNLTVD. Mn(2+) contacts are provided by D343 and D347. Residues D343, D347, R485, D488, and K504 each contribute to the substrate site. A DDXXD motif motif is present at residues 343–347; the sequence is DDIYD. Residue D488 participates in Mn(2+) binding.

It belongs to the terpene synthase family. The cofactor is Mg(2+). Requires Mn(2+) as cofactor.

The protein resides in the plastid. Its subcellular location is the chloroplast. It catalyses the reaction (2E)-geranyl diphosphate = (4R)-limonene + diphosphate. Its activity is regulated as follows. Inhibited by 2-fluorogeranyl diphosphate (FGPP) and 2-fluoroneryl diphosphate (FNPP). Its function is as follows. Catalyzes the conversion of geranyl diphosphate to (+)-(4R)-limonene. Produces exclusively the (+)-enantiomer. Can use neryl diphosphate as substrate. Has no activity with farnesyl diphosphate. This Citrus sinensis (Sweet orange) protein is (R)-limonene synthase 1, chloroplastic.